Reading from the N-terminus, the 168-residue chain is Endoribonuclease YbeY (168 aa).

Positions 126, 130, and 136 each coordinate Zn(2+).

It belongs to the endoribonuclease YbeY family. Requires Zn(2+) as cofactor.

It is found in the cytoplasm. Single strand-specific metallo-endoribonuclease involved in late-stage 70S ribosome quality control and in maturation of the 3' terminus of the 16S rRNA. In Agrobacterium fabrum (strain C58 / ATCC 33970) (Agrobacterium tumefaciens (strain C58)), this protein is Endoribonuclease YbeY.